The primary structure comprises 230 residues: RNA-binding protein 24 (230 aa).

The 78-residue stretch at 11–88 folds into the RRM domain; the sequence is TKIFVGGLPY…RKANVNLAYL (78 aa).

It localises to the nucleus. The protein resides in the cytoplasm. Functionally, multifunctional RNA-binding protein involved in the regulation of pre-mRNA splicing, mRNA stability and mRNA translation important for cell fate decision and differentiation. Plays a major role in pre-mRNA alternative splicing regulation. Mediates preferentially muscle-specific exon inclusion in numerous mRNAs important for striated cardiac and skeletal muscle cell differentiation. Binds to intronic splicing enhancer (ISE) composed of stretches of GU-rich motifs localized in flanking intron of exon that will be included by alternative splicing. Involved in embryonic stem cell (ESC) transition to cardiac cell differentiation by promoting pre-mRNA alternative splicing events of several pluripotency and/or differentiation genes. Plays a role in the regulation of mRNA stability and mRNA translation to which it is bound. Involved in myogenic differentiation by regulating myog levels. Binds to a huge amount of mRNAs. Required for embryonic heart development, sarcomer and M-band formation in striated muscles. In Danio rerio (Zebrafish), this protein is RNA-binding protein 24 (rbm24).